A 283-amino-acid chain; its full sequence is Small ribosomal subunit protein uS3 (283 aa).

The KH type-2 domain maps to 39-107 (VRAYLKTKLK…PVHVNIEEIR (69 aa)). The interval 209–283 (PSGEPPVDLT…GAVPAEKAGE (75 aa)) is disordered. A compositionally biased stretch (basic and acidic residues) spans 217-235 (LTKEDDTKRRGPRRDDGKP). Low complexity predominate over residues 244-260 (PEGQPGAAAAPGAAPAA).

The protein belongs to the universal ribosomal protein uS3 family. As to quaternary structure, part of the 30S ribosomal subunit. Forms a tight complex with proteins S10 and S14.

Functionally, binds the lower part of the 30S subunit head. Binds mRNA in the 70S ribosome, positioning it for translation. In Herminiimonas arsenicoxydans, this protein is Small ribosomal subunit protein uS3.